The chain runs to 624 residues: Basal cell adhesion molecule (624 aa).

The first 25 residues, 1–25 (MEPPDARAGLLWLTLLLSGYSGAQA), serve as a signal peptide directing secretion. 2 Ig-like V-type domains span residues 26 to 136 (ELHV…SSVR) and 141 to 251 (PEAT…HTFR). Residues 26-543 (ELHVSVPPRV…GSVAPQTAQA (518 aa)) are Extracellular-facing. 3 disulfides stabilise this stretch: Cys-47/Cys-119, Cys-166/Cys-231, and Cys-285/Cys-331. Ig-like C2-type domains lie at 268–343 (PSTT…EEVQ), 357–436 (PLEL…QSFQ), and 443–534 (PELK…FHFG). Asn-315, Asn-371, and Asn-378 each carry an N-linked (GlcNAc...) asparagine glycan. Disulfide bonds link Cys-379-Cys-419 and Cys-468-Cys-518. The tract at residues 477 to 497 (KLTWSQRGDTTPAEPPFEGRG) is disordered. Residues 544-564 (GVAVMAVAVSVGLLLLVVAAF) traverse the membrane as a helical segment. Topologically, residues 565-624 (YCMRRKGRPGCCQRAEKGAPPAREPELSHSGSERPEHTGLLMGGPSGGGRGGNGGFGDEC) are cytoplasmic. Residues 574–624 (GCCQRAEKGAPPAREPELSHSGSERPEHTGLLMGGPSGGGRGGNGGFGDEC) form a disordered region. Basic and acidic residues predominate over residues 587–601 (REPELSHSGSERPEH). Ser-592, Ser-594, and Ser-596 each carry phosphoserine. Residues 605-624 (LMGGPSGGGRGGNGGFGDEC) are compositionally biased toward gly residues.

Homodimer. Interacts with ITGA4:ITGB1. Interacts with spectrins SPTA1 and SPTB1.

The protein localises to the cell membrane. Functionally, transmembrane glycoprotein that functions as both a receptor and an adhesion molecule playing a crucial role in cell adhesion, motility, migration and invasion. Extracellular domain enables binding to extracellular matrix proteins, such as laminin, integrin and other ligands while its intracellular domain interacts with cytoskeletal proteins like hemoglobin, facilitating cell signal transduction. Serves as a receptor for laminin alpha-5/LAMA5 to promote cell adhesion. Mechanistically, JAK2 induces BCAM phosphorylation and activates its adhesion to laminin by stimulating a Rap1/AKT signaling pathway in the absence of EPOR. The polypeptide is Basal cell adhesion molecule (Bcam) (Rattus norvegicus (Rat)).